The chain runs to 137 residues: Large ribosomal subunit protein uL16 (137 aa).

The protein belongs to the universal ribosomal protein uL16 family. As to quaternary structure, part of the 50S ribosomal subunit.

Functionally, binds 23S rRNA and is also seen to make contacts with the A and possibly P site tRNAs. In Psychrobacter arcticus (strain DSM 17307 / VKM B-2377 / 273-4), this protein is Large ribosomal subunit protein uL16.